The following is a 475-amino-acid chain: Sulfate adenylyltransferase subunit 1 (475 aa).

Residues 25 to 240 (KSLLRFLTCG…VLETVEVINL (216 aa)) form the tr-type G domain. The tract at residues 34-41 (GSVDDGKS) is G1. 34-41 (GSVDDGKS) is a binding site for GTP. The interval 92–96 (GITID) is G2. The G3 stretch occupies residues 113-116 (DTPG). Residues 113–117 (DTPGH) and 168–171 (NKMD) each bind GTP. A G4 region spans residues 168-171 (NKMD). Residues 206–208 (SAL) are G5.

The protein belongs to the TRAFAC class translation factor GTPase superfamily. Classic translation factor GTPase family. CysN/NodQ subfamily. Heterodimer composed of CysD, the smaller subunit, and CysN.

The catalysed reaction is sulfate + ATP + H(+) = adenosine 5'-phosphosulfate + diphosphate. It functions in the pathway sulfur metabolism; hydrogen sulfide biosynthesis; sulfite from sulfate: step 1/3. With CysD forms the ATP sulfurylase (ATPS) that catalyzes the adenylation of sulfate producing adenosine 5'-phosphosulfate (APS) and diphosphate, the first enzymatic step in sulfur assimilation pathway. APS synthesis involves the formation of a high-energy phosphoric-sulfuric acid anhydride bond driven by GTP hydrolysis by CysN coupled to ATP hydrolysis by CysD. The chain is Sulfate adenylyltransferase subunit 1 from Sodalis glossinidius (strain morsitans).